The sequence spans 452 residues: Pup--protein ligase (452 aa).

E9 lines the Mg(2+) pocket. Residue R53 participates in ATP binding. Mg(2+) is bound at residue Y55. The active-site Proton acceptor is D57. Residue E63 participates in Mg(2+) binding. ATP contacts are provided by T66 and W419.

This sequence belongs to the Pup ligase/Pup deamidase family. Pup-conjugating enzyme subfamily.

It catalyses the reaction ATP + [prokaryotic ubiquitin-like protein]-L-glutamate + [protein]-L-lysine = ADP + phosphate + N(6)-([prokaryotic ubiquitin-like protein]-gamma-L-glutamyl)-[protein]-L-lysine.. Its pathway is protein degradation; proteasomal Pup-dependent pathway. It participates in protein modification; protein pupylation. Its function is as follows. Catalyzes the covalent attachment of the prokaryotic ubiquitin-like protein modifier Pup to the proteasomal substrate proteins, thereby targeting them for proteasomal degradation. This tagging system is termed pupylation. The ligation reaction involves the side-chain carboxylate of the C-terminal glutamate of Pup and the side-chain amino group of a substrate lysine. This chain is Pup--protein ligase, found in Actinosynnema mirum (strain ATCC 29888 / DSM 43827 / JCM 3225 / NBRC 14064 / NCIMB 13271 / NRRL B-12336 / IMRU 3971 / 101).